The chain runs to 165 residues: MSSRSRSTFLAISFFVLIDWVSKLAVLLYRGNLPDARPILYQYSWGKLIFCICPTFNEGAAFGIFSKYKYFLFAIRIAIILGILAFLFLRKKRTSPSIRFSLILLCSGAIGNVGDILFYRHVVDFISIGFKRWYFPTFNFADIFISLGTFIFVYKLYFPTKQKIK.

The next 3 membrane-spanning stretches (helical) occupy residues 9–29 (FLAI…VLLY), 69–89 (KYFL…FLFL), and 98–118 (IRFS…DILF). Active-site residues include aspartate 124 and aspartate 142. A helical membrane pass occupies residues 133–153 (WYFPTFNFADIFISLGTFIFV).

The protein belongs to the peptidase A8 family.

The protein localises to the cell inner membrane. It carries out the reaction Release of signal peptides from bacterial membrane prolipoproteins. Hydrolyzes -Xaa-Yaa-Zaa-|-(S,diacylglyceryl)Cys-, in which Xaa is hydrophobic (preferably Leu), and Yaa (Ala or Ser) and Zaa (Gly or Ala) have small, neutral side chains.. It functions in the pathway protein modification; lipoprotein biosynthesis (signal peptide cleavage). This protein specifically catalyzes the removal of signal peptides from prolipoproteins. This chain is Lipoprotein signal peptidase, found in Chlamydia caviae (strain ATCC VR-813 / DSM 19441 / 03DC25 / GPIC) (Chlamydophila caviae).